A 369-amino-acid chain; its full sequence is Anhydro-N-acetylmuramic acid kinase (369 aa).

12–19 (GTSMDGVD) is an ATP binding site.

The protein belongs to the anhydro-N-acetylmuramic acid kinase family.

The catalysed reaction is 1,6-anhydro-N-acetyl-beta-muramate + ATP + H2O = N-acetyl-D-muramate 6-phosphate + ADP + H(+). Its pathway is amino-sugar metabolism; 1,6-anhydro-N-acetylmuramate degradation. It participates in cell wall biogenesis; peptidoglycan recycling. Its function is as follows. Catalyzes the specific phosphorylation of 1,6-anhydro-N-acetylmuramic acid (anhMurNAc) with the simultaneous cleavage of the 1,6-anhydro ring, generating MurNAc-6-P. Is required for the utilization of anhMurNAc either imported from the medium or derived from its own cell wall murein, and thus plays a role in cell wall recycling. The sequence is that of Anhydro-N-acetylmuramic acid kinase from Shewanella sp. (strain MR-4).